The chain runs to 616 residues: Dihydroxy-acid dehydratase (616 aa).

Asp81 is a binding site for Mg(2+). Position 122 (Cys122) interacts with [2Fe-2S] cluster. Mg(2+)-binding residues include Asp123 and Lys124. N6-carboxylysine is present on Lys124. Residue Cys197 participates in [2Fe-2S] cluster binding. Glu493 is a Mg(2+) binding site. Catalysis depends on Ser519, which acts as the Proton acceptor.

It belongs to the IlvD/Edd family. In terms of assembly, homodimer. [2Fe-2S] cluster is required as a cofactor. Mg(2+) serves as cofactor.

It carries out the reaction (2R)-2,3-dihydroxy-3-methylbutanoate = 3-methyl-2-oxobutanoate + H2O. The enzyme catalyses (2R,3R)-2,3-dihydroxy-3-methylpentanoate = (S)-3-methyl-2-oxopentanoate + H2O. It functions in the pathway amino-acid biosynthesis; L-isoleucine biosynthesis; L-isoleucine from 2-oxobutanoate: step 3/4. Its pathway is amino-acid biosynthesis; L-valine biosynthesis; L-valine from pyruvate: step 3/4. Functions in the biosynthesis of branched-chain amino acids. Catalyzes the dehydration of (2R,3R)-2,3-dihydroxy-3-methylpentanoate (2,3-dihydroxy-3-methylvalerate) into 2-oxo-3-methylpentanoate (2-oxo-3-methylvalerate) and of (2R)-2,3-dihydroxy-3-methylbutanoate (2,3-dihydroxyisovalerate) into 2-oxo-3-methylbutanoate (2-oxoisovalerate), the penultimate precursor to L-isoleucine and L-valine, respectively. The sequence is that of Dihydroxy-acid dehydratase from Corynebacterium kroppenstedtii (strain DSM 44385 / JCM 11950 / CIP 105744 / CCUG 35717).